The primary structure comprises 499 residues: Probable malate:quinone oxidoreductase (499 aa).

This sequence belongs to the MQO family. It depends on FAD as a cofactor.

It catalyses the reaction (S)-malate + a quinone = a quinol + oxaloacetate. It functions in the pathway carbohydrate metabolism; tricarboxylic acid cycle; oxaloacetate from (S)-malate (quinone route): step 1/1. This chain is Probable malate:quinone oxidoreductase, found in Exiguobacterium sp. (strain ATCC BAA-1283 / AT1b).